The primary structure comprises 423 residues: Serine--tRNA ligase (423 aa).

Residue 229–231 participates in L-serine binding; sequence TAE. 260–262 is a binding site for ATP; it reads RKE. Glu-283 provides a ligand contact to L-serine. An ATP-binding site is contributed by 347–350; the sequence is EISS. Ser-383 lines the L-serine pocket.

The protein belongs to the class-II aminoacyl-tRNA synthetase family. Type-1 seryl-tRNA synthetase subfamily. As to quaternary structure, homodimer. The tRNA molecule binds across the dimer.

Its subcellular location is the cytoplasm. It carries out the reaction tRNA(Ser) + L-serine + ATP = L-seryl-tRNA(Ser) + AMP + diphosphate + H(+). The enzyme catalyses tRNA(Sec) + L-serine + ATP = L-seryl-tRNA(Sec) + AMP + diphosphate + H(+). The protein operates within aminoacyl-tRNA biosynthesis; selenocysteinyl-tRNA(Sec) biosynthesis; L-seryl-tRNA(Sec) from L-serine and tRNA(Sec): step 1/1. Functionally, catalyzes the attachment of serine to tRNA(Ser). Is also able to aminoacylate tRNA(Sec) with serine, to form the misacylated tRNA L-seryl-tRNA(Sec), which will be further converted into selenocysteinyl-tRNA(Sec). This chain is Serine--tRNA ligase, found in Syntrophotalea carbinolica (strain DSM 2380 / NBRC 103641 / GraBd1) (Pelobacter carbinolicus).